The chain runs to 572 residues: MRTSQYLLSTLKETPADAEVISHQLMLRAGMIRKLASGLYTWLPTGVRVLKKVENIVREEMNNAGAIEVSMPVVQPADLWQESGRWEQYGPELLRFVDRGERPFVLGPTHEEVITDLIRNELSSYKQLPLNFYQIQTKFRDEVRPRFGVMRSREFLMKDAYSFHTSQESLQETYDAMYAAYSKIFSRMGLDFRAVQADTGSIGGSASHEFQVLAQSGEDDVVFSDTSDYAANIELAEAIAPKEPRAAATQEMTLVDTPNAKTIAELVEQFNLPIEKTVKTLLVKAVEGSSFPLVALLVRGDHELNEVKAEKLPQVASPLTFATEEEIRAVVKAGPGSLGPVNMPIPVVIDRTVAAMSDFAAGANIDGKHYFGINWDRDVATPEVADIRNVVAGDPSPDGQGTLLIKRGIEVGHIFQLGTKYSEALKASVQGEDGRNQILTMGCYGIGVTRVVAAAIEQNYDERGIVWPDAIAPFQVAILPMNMHKSFRVQELAEKLYSELRAQGIEVLLDDRKERPGVMFADMELIGIPHTIVLGDRNLDNDDIEYKYRRNGEKQLIKTGDIVEYLVKQIKG.

It belongs to the class-II aminoacyl-tRNA synthetase family. ProS type 1 subfamily. As to quaternary structure, homodimer.

Its subcellular location is the cytoplasm. It carries out the reaction tRNA(Pro) + L-proline + ATP = L-prolyl-tRNA(Pro) + AMP + diphosphate. In terms of biological role, catalyzes the attachment of proline to tRNA(Pro) in a two-step reaction: proline is first activated by ATP to form Pro-AMP and then transferred to the acceptor end of tRNA(Pro). As ProRS can inadvertently accommodate and process non-cognate amino acids such as alanine and cysteine, to avoid such errors it has two additional distinct editing activities against alanine. One activity is designated as 'pretransfer' editing and involves the tRNA(Pro)-independent hydrolysis of activated Ala-AMP. The other activity is designated 'posttransfer' editing and involves deacylation of mischarged Ala-tRNA(Pro). The misacylated Cys-tRNA(Pro) is not edited by ProRS. The polypeptide is Proline--tRNA ligase (Escherichia coli O9:H4 (strain HS)).